A 338-amino-acid polypeptide reads, in one-letter code: Ketol-acid reductoisomerase (NADP(+)) (338 aa).

Residues 1–181 (MKVFYDKDCD…GGGRTGIIET (181 aa)) enclose the KARI N-terminal Rossmann domain. NADP(+) contacts are provided by residues 24–27 (YGSQ), R47, S50, T52, and 82–85 (DEFQ). H107 is an active-site residue. Position 133 (G133) interacts with NADP(+). One can recognise a KARI C-terminal knotted domain in the interval 182–327 (TFKDETETDL…EQLRSMMPWI (146 aa)). Mg(2+) is bound by residues D190, E194, E226, and E230. S251 provides a ligand contact to substrate.

This sequence belongs to the ketol-acid reductoisomerase family. It depends on Mg(2+) as a cofactor.

The enzyme catalyses (2R)-2,3-dihydroxy-3-methylbutanoate + NADP(+) = (2S)-2-acetolactate + NADPH + H(+). It catalyses the reaction (2R,3R)-2,3-dihydroxy-3-methylpentanoate + NADP(+) = (S)-2-ethyl-2-hydroxy-3-oxobutanoate + NADPH + H(+). It functions in the pathway amino-acid biosynthesis; L-isoleucine biosynthesis; L-isoleucine from 2-oxobutanoate: step 2/4. Its pathway is amino-acid biosynthesis; L-valine biosynthesis; L-valine from pyruvate: step 2/4. Involved in the biosynthesis of branched-chain amino acids (BCAA). Catalyzes an alkyl-migration followed by a ketol-acid reduction of (S)-2-acetolactate (S2AL) to yield (R)-2,3-dihydroxy-isovalerate. In the isomerase reaction, S2AL is rearranged via a Mg-dependent methyl migration to produce 3-hydroxy-3-methyl-2-ketobutyrate (HMKB). In the reductase reaction, this 2-ketoacid undergoes a metal-dependent reduction by NADPH to yield (R)-2,3-dihydroxy-isovalerate. This Pseudomonas putida (strain W619) protein is Ketol-acid reductoisomerase (NADP(+)).